We begin with the raw amino-acid sequence, 506 residues long: 2,3-bisphosphoglycerate-independent phosphoglycerate mutase (506 aa).

The Mn(2+) site is built by Asp12 and Ser63. Ser63 functions as the Phosphoserine intermediate in the catalytic mechanism. Residues His122, Arg151–Asp152, Arg182, Arg188, Arg253–Arg256, and Lys323 each bind substrate. Asp390, His394, Asp432, His433, and His451 together coordinate Mn(2+).

It belongs to the BPG-independent phosphoglycerate mutase family. In terms of assembly, monomer. Requires Mn(2+) as cofactor.

The catalysed reaction is (2R)-2-phosphoglycerate = (2R)-3-phosphoglycerate. The protein operates within carbohydrate degradation; glycolysis; pyruvate from D-glyceraldehyde 3-phosphate: step 3/5. Catalyzes the interconversion of 2-phosphoglycerate and 3-phosphoglycerate. The chain is 2,3-bisphosphoglycerate-independent phosphoglycerate mutase from Wolbachia pipientis wMel.